A 181-amino-acid chain; its full sequence is Peptide deformylase (181 aa).

Residues Cys99 and His141 each contribute to the Fe cation site. The active site involves Glu142. Residue His145 coordinates Fe cation.

It belongs to the polypeptide deformylase family. It depends on Fe(2+) as a cofactor.

The enzyme catalyses N-terminal N-formyl-L-methionyl-[peptide] + H2O = N-terminal L-methionyl-[peptide] + formate. Functionally, removes the formyl group from the N-terminal Met of newly synthesized proteins. Requires at least a dipeptide for an efficient rate of reaction. N-terminal L-methionine is a prerequisite for activity but the enzyme has broad specificity at other positions. This Chlamydia trachomatis serovar A (strain ATCC VR-571B / DSM 19440 / HAR-13) protein is Peptide deformylase.